The chain runs to 125 residues: MSGRGKGGKVKGKSKTRSSRAGLQFPVGRIHRLLRKGNYAQRVGAGAPVYLAAVMEYLAAEVLELAGNAARDNKKSRIIPRHLQLAIRNDEELNKLLSGVTIAQGGVLPNIQAVLLPKKTQKAAK.

Positions 1–18 are enriched in basic residues; it reads MSGRGKGGKVKGKSKTRS. The disordered stretch occupies residues 1-23; sequence MSGRGKGGKVKGKSKTRSSRAGL. Position 2 is an N-acetylserine (S2). Q104 bears the N5-methylglutamine mark.

Belongs to the histone H2A family. In terms of assembly, the nucleosome is a histone octamer containing two molecules each of H2A, H2B, H3 and H4 assembled in one H3-H4 heterotetramer and two H2A-H2B heterodimers. The octamer wraps approximately 147 bp of DNA.

It is found in the nucleus. The protein resides in the chromosome. In terms of biological role, core component of nucleosome. Nucleosomes wrap and compact DNA into chromatin, limiting DNA accessibility to the cellular machineries which require DNA as a template. Histones thereby play a central role in transcription regulation, DNA repair, DNA replication and chromosomal stability. DNA accessibility is regulated via a complex set of post-translational modifications of histones, also called histone code, and nucleosome remodeling. This Sepia officinalis (Common cuttlefish) protein is Histone H2A.